Reading from the N-terminus, the 124-residue chain is Large ribosomal subunit protein eL33 (124 aa).

A2 carries the N-acetylalanine modification.

It belongs to the eukaryotic ribosomal protein eL33 family.

In Caenorhabditis elegans, this protein is Large ribosomal subunit protein eL33.